A 943-amino-acid chain; its full sequence is Conidiophore development regulator abaA (943 aa).

Disordered stretches follow at residues 1–69 (MSSS…FNGG) and 111–133 (TSRQ…HQRG). Basic and acidic residues predominate over residues 29–43 (IDTRRSFHGDSRLPL). Residues 59–68 (PSSAHSSFNG) are compositionally biased toward polar residues. Residues 161–254 (QKDKGGVWRR…QVVKKFFEDL (94 aa)) constitute a DNA-binding region (TEA). Positions 537–555 (EHQRKKEKRSCGKKPDLER) are enriched in basic and acidic residues. 2 disordered regions span residues 537 to 575 (EHQR…AAWT) and 809 to 901 (GAAG…HHPG). The span at 865–889 (DSWTAGSSAGGAPAATPTGPDWGPT) shows a compositional bias: low complexity.

This sequence belongs to the TEC1 family.

Its subcellular location is the nucleus. In terms of biological role, brlA, abaA and wetA are pivotal regulators of conidiophore development and conidium maturation. They act individually and together to regulate their own expression and that of numerous other sporulation-specific genes. Binds to the sequence 5'-CATTCY-3', where Y is a pyrimidine, making both major- and minor-groove contacts. This chain is Conidiophore development regulator abaA, found in Hapsidospora chrysogena (Acremonium chrysogenum).